Consider the following 193-residue polypeptide: Probable GTP-binding protein EngB (193 aa).

One can recognise an EngB-type G domain in the interval 22-193; it reads LLPEVALAGR…AAWEAIYRHL (172 aa). GTP is bound by residues 30 to 37, 57 to 61, 75 to 78, 142 to 145, and 174 to 176; these read GRSNVGKS, GKTQT, DVPG, TKLD, and FSS. Positions 37 and 59 each coordinate Mg(2+).

Belongs to the TRAFAC class TrmE-Era-EngA-EngB-Septin-like GTPase superfamily. EngB GTPase family. Requires Mg(2+) as cofactor.

Functionally, necessary for normal cell division and for the maintenance of normal septation. The sequence is that of Probable GTP-binding protein EngB from Exiguobacterium sibiricum (strain DSM 17290 / CCUG 55495 / CIP 109462 / JCM 13490 / 255-15).